The following is a 42-amino-acid chain: Large ribosomal subunit protein bL36 (42 aa).

The protein belongs to the bacterial ribosomal protein bL36 family.

This Anaplasma phagocytophilum (strain HZ) protein is Large ribosomal subunit protein bL36.